Here is a 597-residue protein sequence, read N- to C-terminus: Glutamine--fructose-6-phosphate aminotransferase [isomerizing] (597 aa).

Residue cysteine 2 is the Nucleophile; for GATase activity of the active site. Positions 2–218 (CGIVGYIGDS…ENSVGQISLE (217 aa)) constitute a Glutamine amidotransferase type-2 domain. 2 SIS domains span residues 276–416 (IDPE…QLGT) and 449–587 (LSKR…VDHP). The active-site For Fru-6P isomerization activity is lysine 592.

Homodimer.

It is found in the cytoplasm. The catalysed reaction is D-fructose 6-phosphate + L-glutamine = D-glucosamine 6-phosphate + L-glutamate. In terms of biological role, catalyzes the first step in hexosamine metabolism, converting fructose-6P into glucosamine-6P using glutamine as a nitrogen source. This chain is Glutamine--fructose-6-phosphate aminotransferase [isomerizing], found in Helicobacter pylori (strain J99 / ATCC 700824) (Campylobacter pylori J99).